We begin with the raw amino-acid sequence, 207 residues long: MSDALKELAEYLSEKRSDDVVSTDVNAMGELSVTVAPAQMVGFIEFLKTDRTCRFSTLIDITAVDYPSRDRRFDVVYHFLSMYQNHRVRVRAAIREEDTLPSISGVHPGAGWYEREIYDMFGILFTGHADLRRLLTDYGFRGHPLRKDFPTTGYTEVRYDEELKRVVYEPVSLVQEYRQFDFMSPWEGAQYVLPGDEKADDKAGETA.

The protein belongs to the complex I 30 kDa subunit family. NDH-1 is composed of 14 different subunits. Subunits NuoB, C, D, E, F, and G constitute the peripheral sector of the complex.

It localises to the cell inner membrane. The catalysed reaction is a quinone + NADH + 5 H(+)(in) = a quinol + NAD(+) + 4 H(+)(out). Functionally, NDH-1 shuttles electrons from NADH, via FMN and iron-sulfur (Fe-S) centers, to quinones in the respiratory chain. The immediate electron acceptor for the enzyme in this species is believed to be ubiquinone. Couples the redox reaction to proton translocation (for every two electrons transferred, four hydrogen ions are translocated across the cytoplasmic membrane), and thus conserves the redox energy in a proton gradient. The sequence is that of NADH-quinone oxidoreductase subunit C from Jannaschia sp. (strain CCS1).